A 101-amino-acid polypeptide reads, in one-letter code: NAD(P)H-quinone oxidoreductase subunit 4L, chloroplastic (101 aa).

Transmembrane regions (helical) follow at residues 2–22 (MLEHIPVLSAYLFSIDIYGLI), 32–52 (MCLELILNAVNINFVTFSDFF), and 61–81 (IFSIFVIAIAAAEAAIGSAIV).

This sequence belongs to the complex I subunit 4L family. In terms of assembly, NDH is composed of at least 16 different subunits, 5 of which are encoded in the nucleus.

It is found in the plastid. Its subcellular location is the chloroplast thylakoid membrane. It catalyses the reaction a plastoquinone + NADH + (n+1) H(+)(in) = a plastoquinol + NAD(+) + n H(+)(out). It carries out the reaction a plastoquinone + NADPH + (n+1) H(+)(in) = a plastoquinol + NADP(+) + n H(+)(out). Functionally, NDH shuttles electrons from NAD(P)H:plastoquinone, via FMN and iron-sulfur (Fe-S) centers, to quinones in the photosynthetic chain and possibly in a chloroplast respiratory chain. The immediate electron acceptor for the enzyme in this species is believed to be plastoquinone. Couples the redox reaction to proton translocation, and thus conserves the redox energy in a proton gradient. This Gossypium barbadense (Sea Island cotton) protein is NAD(P)H-quinone oxidoreductase subunit 4L, chloroplastic.